Here is a 407-residue protein sequence, read N- to C-terminus: Cation efflux system protein CusB (407 aa).

The first 26 residues, 1–26 (MKKIALIIGSMIAGGIISAAGFTWFA), serve as a signal peptide directing secretion.

This sequence belongs to the membrane fusion protein (MFP) (TC 8.A.1) family. As to quaternary structure, the cus efflux system is composed of CusA, CusB, CusC and CusF.

Its function is as follows. Part of a cation efflux system that mediates resistance to copper and silver. This Escherichia coli O6:H1 (strain CFT073 / ATCC 700928 / UPEC) protein is Cation efflux system protein CusB (cusB).